A 354-amino-acid chain; its full sequence is Mycothiol acetyltransferase (354 aa).

The span at 1-18 (MMVDNQTPDSSTLSTAST) shows a compositional bias: polar residues. The disordered stretch occupies residues 1–21 (MMVDNQTPDSSTLSTASTPVY). 2 N-acetyltransferase domains span residues 21-176 (YAEP…QTRE) and 191-354 (LRMR…EPAA). Residue Glu-52 coordinates 1D-myo-inositol 2-(L-cysteinylamino)-2-deoxy-alpha-D-glucopyranoside. 101-103 (AAV) is a binding site for acetyl-CoA. Residues Glu-217, Lys-259, and Glu-274 each coordinate 1D-myo-inositol 2-(L-cysteinylamino)-2-deoxy-alpha-D-glucopyranoside. Acetyl-CoA is bound by residues 278 to 280 (VGV) and 285 to 291 (QGGGLGR). A 1D-myo-inositol 2-(L-cysteinylamino)-2-deoxy-alpha-D-glucopyranoside-binding site is contributed by Tyr-318.

This sequence belongs to the acetyltransferase family. MshD subfamily. Monomer.

The catalysed reaction is 1D-myo-inositol 2-(L-cysteinylamino)-2-deoxy-alpha-D-glucopyranoside + acetyl-CoA = mycothiol + CoA + H(+). Catalyzes the transfer of acetyl from acetyl-CoA to desacetylmycothiol (Cys-GlcN-Ins) to form mycothiol. The protein is Mycothiol acetyltransferase of Rothia mucilaginosa (strain DY-18) (Stomatococcus mucilaginosus).